The chain runs to 216 residues: 2',3'-cyclic-nucleotide 3'-phosphodiesterase (216 aa).

Histidine 39 (proton donor/acceptor) is an active-site residue. Position 41 (threonine 41) interacts with substrate. Histidine 137 serves as the catalytic Proton donor/acceptor. Residues serine 139 and tyrosine 142 each contribute to the substrate site.

Belongs to the 2H phosphoesterase superfamily. CPD1 family.

It is found in the golgi apparatus. The catalysed reaction is a nucleoside 2',3'-cyclic phosphate + H2O = a nucleoside 2'-phosphate + H(+). Its function is as follows. Involved in the metabolism of ADP-ribose 1',2'-cyclic phosphate which is produced as a consequence of tRNA splicing. The polypeptide is 2',3'-cyclic-nucleotide 3'-phosphodiesterase (CPD1) (Eremothecium gossypii (strain ATCC 10895 / CBS 109.51 / FGSC 9923 / NRRL Y-1056) (Yeast)).